The chain runs to 125 residues: Putative RNA polymerase sigma-G factor (125 aa).

The protein belongs to the sigma-70 factor family.

Its function is as follows. Sigma factors are initiation factors that promote the attachment of RNA polymerase to specific initiation sites and are then released. The polypeptide is Putative RNA polymerase sigma-G factor (Bacillus thuringiensis subsp. kurstaki).